The sequence spans 324 residues: Olfactory receptor 7G2 (324 aa).

The Extracellular segment spans residues M1 to P25. N-linked (GlcNAc...) asparagine glycosylation is present at N5. The chain crosses the membrane as a helical span at residues V26 to L46. The Cytoplasmic portion of the chain corresponds to L47–H54. The chain crosses the membrane as a helical span at residues L55–T75. The Extracellular portion of the chain corresponds to T76–T99. N89 is a glycosylation site (N-linked (GlcNAc...) asparagine). The cysteines at positions 97 and 189 are disulfide-linked. A helical transmembrane segment spans residues Q100–Y120. Residues D121–R139 are Cytoplasmic-facing. Residues L140–S160 form a helical membrane-spanning segment. Over L161 to I197 the chain is Extracellular. The chain crosses the membrane as a helical span at residues L198 to S217. The Cytoplasmic segment spans residues Y218 to A237. Residues V238–V258 form a helical membrane-spanning segment. Residues Y259–T271 lie on the Extracellular side of the membrane. The chain crosses the membrane as a helical span at residues A272–L292. Topologically, residues R293–E324 are cytoplasmic.

The protein belongs to the G-protein coupled receptor 1 family.

The protein resides in the cell membrane. In terms of biological role, odorant receptor. The protein is Olfactory receptor 7G2 (OR7G2) of Homo sapiens (Human).